The chain runs to 190 residues: ATP synthase subunit delta (190 aa).

This sequence belongs to the ATPase delta chain family. F-type ATPases have 2 components, F(1) - the catalytic core - and F(0) - the membrane proton channel. F(1) has five subunits: alpha(3), beta(3), gamma(1), delta(1), epsilon(1). F(0) has three main subunits: a(1), b(2) and c(10-14). The alpha and beta chains form an alternating ring which encloses part of the gamma chain. F(1) is attached to F(0) by a central stalk formed by the gamma and epsilon chains, while a peripheral stalk is formed by the delta and b chains.

The protein localises to the cell inner membrane. F(1)F(0) ATP synthase produces ATP from ADP in the presence of a proton or sodium gradient. F-type ATPases consist of two structural domains, F(1) containing the extramembraneous catalytic core and F(0) containing the membrane proton channel, linked together by a central stalk and a peripheral stalk. During catalysis, ATP synthesis in the catalytic domain of F(1) is coupled via a rotary mechanism of the central stalk subunits to proton translocation. Its function is as follows. This protein is part of the stalk that links CF(0) to CF(1). It either transmits conformational changes from CF(0) to CF(1) or is implicated in proton conduction. The sequence is that of ATP synthase subunit delta from Methylobacterium nodulans (strain LMG 21967 / CNCM I-2342 / ORS 2060).